The chain runs to 36 residues: U-limacoditoxin(7)-Dv63 (36 aa).

Positions Met-1–Phe-19 are cleaved as a signal peptide.

This sequence belongs to the limacoditoxin-7 family. As to expression, expressed by the venom secretory cell of the spine. The spine is a cuticular structure containing a single large nucleated venom-secreting cell at its base. It is an independent unit capable of producing, storing and injecting venom. On the back of D.vulnerans caterpillars, spines are grouped together by 50 to 100 to form scoli, of which there are eight in D.vulnerans.

It is found in the secreted. Functionally, peptide with insecticidal and antiparasitic activities. Induces irreversible paralysis in D.melanogaster when tested at high doses. It shows a moderate antiparasitic activity against the major pathogenic nematode of ruminants (H.contortus, EC(50)=41.3 uM). Does not show antimicrobial activities. Does not induce increase in intracellular calcium in mouse DRG neurons, suggesting that it does not induce pain. The protein is U-limacoditoxin(7)-Dv63 of Doratifera vulnerans (Mottled cup moth).